A 386-amino-acid chain; its full sequence is Copper-containing nitrite reductase (386 aa).

An N-terminal signal peptide occupies residues 1–18 (MKRQALAAIIASMFALAA). Cys19 is lipidated: N-palmitoyl cysteine. The S-diacylglycerol cysteine moiety is linked to residue Cys19. Plastocyanin-like domains lie at 97-191 (WTFD…ILVE) and 241-342 (GHVG…LKVE). His130, His135, His170, Cys171, His179, and Met184 together coordinate Cu cation. Residue His135 participates in substrate binding. Residue His276 participates in substrate binding. His325 is a binding site for Cu cation. The segment at 363–386 (GAAPAASAPAASAPAASAPAKSDY) is disordered. Residues 364 to 386 (AAPAASAPAASAPAASAPAKSDY) show a composition bias toward low complexity. 3 consecutive repeat copies span residues 367–371 (AASAP), 372–376 (AASAP), and 377–381 (AASAP). Positions 367-381 (AASAPAASAPAASAP) are 3 X 5 AA tandem repeats of A-A-S-A-P.

The protein belongs to the multicopper oxidase family. Homotrimer. It depends on Cu(+) as a cofactor. The cofactor is Cu(2+).

The protein resides in the cell outer membrane. It catalyses the reaction nitric oxide + Fe(III)-[cytochrome c] + H2O = Fe(II)-[cytochrome c] + nitrite + 2 H(+). Catalyzes the reduction of nitrite to nitric oxide (NO). It could be essential for growth and survival in oxygen-depleted environments. In Neisseria meningitidis serogroup A / serotype 4A (strain DSM 15465 / Z2491), this protein is Copper-containing nitrite reductase (aniA).